The primary structure comprises 367 residues: Dimethyladenosine transferase 1, mitochondrial (367 aa).

Residues 1-16 (MASASRLPPLPALRDF) constitute a mitochondrion transit peptide. Residues 30–33 (QNYL), Asn-31, Leu-33, Gly-58, Glu-80, Asp-106, and Asn-141 contribute to the S-adenosyl-L-methionine site.

Belongs to the class I-like SAM-binding methyltransferase superfamily. rRNA adenine N(6)-methyltransferase family. KsgA subfamily.

It localises to the mitochondrion. Probable S-adenosyl-L-methionine-dependent methyltransferase which specifically dimethylates mitochondrial 12S rRNA at the conserved stem loop. Also required for basal transcription of mitochondrial DNA. Stimulates transcription independently of the methyltransferase activity. This chain is Dimethyladenosine transferase 1, mitochondrial (tfbm-1), found in Caenorhabditis elegans.